A 105-amino-acid chain; its full sequence is Small ribosomal subunit protein uS10 (105 aa).

Belongs to the universal ribosomal protein uS10 family. As to quaternary structure, part of the 30S ribosomal subunit.

Its function is as follows. Involved in the binding of tRNA to the ribosomes. This chain is Small ribosomal subunit protein uS10, found in Thermus thermophilus (strain ATCC BAA-163 / DSM 7039 / HB27).